Consider the following 358-residue polypeptide: 3-dehydroquinate synthase (358 aa).

NAD(+) contacts are provided by residues 105–109, 129–130, Lys142, Lys151, and 169–172; these read GVVGD, TT, and TLKT. Zn(2+) is bound by residues Glu184, His245, and His262.

Belongs to the sugar phosphate cyclases superfamily. Dehydroquinate synthase family. NAD(+) serves as cofactor. It depends on Co(2+) as a cofactor. Zn(2+) is required as a cofactor.

It is found in the cytoplasm. It catalyses the reaction 7-phospho-2-dehydro-3-deoxy-D-arabino-heptonate = 3-dehydroquinate + phosphate. It participates in metabolic intermediate biosynthesis; chorismate biosynthesis; chorismate from D-erythrose 4-phosphate and phosphoenolpyruvate: step 2/7. Catalyzes the conversion of 3-deoxy-D-arabino-heptulosonate 7-phosphate (DAHP) to dehydroquinate (DHQ). The polypeptide is 3-dehydroquinate synthase (Enterococcus faecalis (strain ATCC 47077 / OG1RF)).